Here is a 930-residue protein sequence, read N- to C-terminus: Carnosine synthase 1 (930 aa).

Residues Met1–Glu24 form a disordered region. One can recognise an ATP-grasp domain in the interval Arg624–Leu825. ATP is bound at residue Val650–Asp716. Mg(2+)-binding residues include Glu782, Glu794, and Asn796. Mn(2+)-binding residues include Glu782, Glu794, and Asn796.

As to quaternary structure, homotetramer. Requires Mg(2+) as cofactor. The cofactor is Mn(2+).

The enzyme catalyses beta-alanine + L-histidine + ATP = carnosine + ADP + phosphate + H(+). It carries out the reaction 4-aminobutanoate + L-histidine + ATP = L-homocarnosine + ADP + phosphate + H(+). Functionally, catalyzes the synthesis of carnosine and homocarnosine. Carnosine is synthesized more efficiently than homocarnosine. This Gallus gallus (Chicken) protein is Carnosine synthase 1.